We begin with the raw amino-acid sequence, 339 residues long: Methylthioribose-1-phosphate isomerase (339 aa).

Residues R52–A54, R89, and Q188 contribute to the substrate site. Catalysis depends on D229, which acts as the Proton donor. N239–K240 contacts substrate.

It belongs to the eIF-2B alpha/beta/delta subunits family. MtnA subfamily.

It catalyses the reaction 5-(methylsulfanyl)-alpha-D-ribose 1-phosphate = 5-(methylsulfanyl)-D-ribulose 1-phosphate. Its pathway is amino-acid biosynthesis; L-methionine biosynthesis via salvage pathway; L-methionine from S-methyl-5-thio-alpha-D-ribose 1-phosphate: step 1/6. Its function is as follows. Catalyzes the interconversion of methylthioribose-1-phosphate (MTR-1-P) into methylthioribulose-1-phosphate (MTRu-1-P). In Anaeromyxobacter sp. (strain K), this protein is Methylthioribose-1-phosphate isomerase.